Here is a 334-residue protein sequence, read N- to C-terminus: Glutamyl-tRNA reductase (334 aa).

Residues 49–52 (TCNR), S107, 112–114 (EDQ), and Q118 contribute to the substrate site. Catalysis depends on C50, which acts as the Nucleophile. NADP(+) is bound at residue 186 to 191 (GNGEMG).

It belongs to the glutamyl-tRNA reductase family. In terms of assembly, homodimer.

The catalysed reaction is (S)-4-amino-5-oxopentanoate + tRNA(Glu) + NADP(+) = L-glutamyl-tRNA(Glu) + NADPH + H(+). Its pathway is porphyrin-containing compound metabolism; protoporphyrin-IX biosynthesis; 5-aminolevulinate from L-glutamyl-tRNA(Glu): step 1/2. In terms of biological role, catalyzes the NADPH-dependent reduction of glutamyl-tRNA(Glu) to glutamate 1-semialdehyde (GSA). The sequence is that of Glutamyl-tRNA reductase from Alkaliphilus oremlandii (strain OhILAs) (Clostridium oremlandii (strain OhILAs)).